Reading from the N-terminus, the 1401-residue chain is DNA-directed RNA polymerase subunit beta' (1401 aa).

Positions 70, 72, 85, and 88 each coordinate Zn(2+). Positions 460, 462, and 464 each coordinate Mg(2+). Zn(2+) is bound by residues Cys808, Cys882, Cys889, and Cys892.

It belongs to the RNA polymerase beta' chain family. In terms of assembly, the RNAP catalytic core consists of 2 alpha, 1 beta, 1 beta' and 1 omega subunit. When a sigma factor is associated with the core the holoenzyme is formed, which can initiate transcription. It depends on Mg(2+) as a cofactor. Requires Zn(2+) as cofactor.

The enzyme catalyses RNA(n) + a ribonucleoside 5'-triphosphate = RNA(n+1) + diphosphate. Functionally, DNA-dependent RNA polymerase catalyzes the transcription of DNA into RNA using the four ribonucleoside triphosphates as substrates. This Legionella pneumophila (strain Paris) protein is DNA-directed RNA polymerase subunit beta'.